A 90-amino-acid chain; its full sequence is Barrier-to-autointegration factor B (90 aa).

This sequence belongs to the BAF family. In terms of assembly, homodimer. Interacts with nemp1a and nemp1b.

The protein localises to the nucleus. The protein resides in the chromosome. It localises to the nucleus envelope. It is found in the cytoplasm. Non-specific DNA-binding protein that plays key roles in mitotic nuclear reassembly, chromatin organization, DNA damage response, gene expression and intrinsic immunity against foreign DNA. Contains two non-specific double-stranded DNA (dsDNA)-binding sites which promote DNA cross-bridging. Plays a key role in nuclear membrane reformation at the end of mitosis by driving formation of a single nucleus in a spindle-independent manner. Transiently cross-bridges anaphase chromosomes via its ability to bridge distant DNA sites, leading to the formation of a dense chromatin network at the chromosome ensemble surface that limits membranes to the surface. Also acts as a negative regulator of innate immune activation by restricting CGAS activity toward self-DNA upon acute loss of nuclear membrane integrity. Outcompetes CGAS for DNA-binding, thereby preventing CGAS activation and subsequent damaging autoinflammatory responses. Also involved in DNA damage response; acts by inhibiting the ADP-ribosyltransferase activity of PARP1. Involved in the recognition of exogenous dsDNA in the cytosol: associates with exogenous dsDNA immediately after its appearance in the cytosol at endosome breakdown and is required to avoid autophagy. The protein is Barrier-to-autointegration factor B (banf1-b) of Xenopus laevis (African clawed frog).